The following is a 626-amino-acid chain: Beta-galactosidase large subunit (626 aa).

Glutamate 466 serves as the catalytic Proton donor. Glutamate 534 acts as the Nucleophile in catalysis.

It belongs to the glycosyl hydrolase 2 family. Heterodimer of a large (LacL) and a small subunit (LacM).

It carries out the reaction Hydrolysis of terminal non-reducing beta-D-galactose residues in beta-D-galactosides.. Functionally, component of a beta-galactosidase that displays activity with the artificial chromogenic substrate o-nitrophenyl-beta-D-galactopyranoside (ONPG). The sequence is that of Beta-galactosidase large subunit from Leuconostoc lactis.